The chain runs to 632 residues: Probable potassium transport system protein Kup (632 aa).

A run of 12 helical transmembrane segments spans residues leucine 19–valine 39, valine 57–valine 77, isoleucine 111–proline 131, proline 147–leucine 167, isoleucine 175–leucine 195, alanine 213–leucine 233, tryptophan 257–leucine 277, proline 286–alanine 306, isoleucine 347–phenylalanine 367, alanine 376–leucine 396, phenylalanine 404–alanine 424, and valine 429–threonine 449.

This sequence belongs to the HAK/KUP transporter (TC 2.A.72) family.

Its subcellular location is the cell inner membrane. It carries out the reaction K(+)(in) + H(+)(in) = K(+)(out) + H(+)(out). Transport of potassium into the cell. Likely operates as a K(+):H(+) symporter. This Nitrosospira multiformis (strain ATCC 25196 / NCIMB 11849 / C 71) protein is Probable potassium transport system protein Kup.